Reading from the N-terminus, the 337-residue chain is Large ribosomal subunit protein uL3 (337 aa).

This sequence belongs to the universal ribosomal protein uL3 family. In terms of assembly, part of the 50S ribosomal subunit. Forms a cluster with proteins L14 and L24e.

In terms of biological role, one of the primary rRNA binding proteins, it binds directly near the 3'-end of the 23S rRNA, where it nucleates assembly of the 50S subunit. This Methanospirillum hungatei JF-1 (strain ATCC 27890 / DSM 864 / NBRC 100397 / JF-1) protein is Large ribosomal subunit protein uL3.